The following is a 378-amino-acid chain: Cytochrome b (378 aa).

4 helical membrane passes run 34-54 (FGSL…FLAM), 78-99 (WFLR…FIHV), 114-134 (WNTG…GYVL), and 179-199 (FFTF…IHLL). Residues histidine 84 and histidine 98 each coordinate heme b. Histidine 183 and histidine 197 together coordinate heme b. An a ubiquinone-binding site is contributed by histidine 202. Transmembrane regions (helical) follow at residues 227–247 (YKDI…IWKF), 289–309 (LGGV…PFTH), 321–341 (LNQI…WIGA), and 348–368 (YILT…INPL).

Belongs to the cytochrome b family. In terms of assembly, the main subunits of complex b-c1 are: cytochrome b, cytochrome c1 and the Rieske protein. Requires heme b as cofactor.

It is found in the mitochondrion inner membrane. Its function is as follows. Component of the ubiquinol-cytochrome c reductase complex (complex III or cytochrome b-c1 complex) that is part of the mitochondrial respiratory chain. The b-c1 complex mediates electron transfer from ubiquinol to cytochrome c. Contributes to the generation of a proton gradient across the mitochondrial membrane that is then used for ATP synthesis. The sequence is that of Cytochrome b (mt:Cyt-b) from Anopheles gambiae (African malaria mosquito).